A 317-amino-acid polypeptide reads, in one-letter code: Methionyl-tRNA formyltransferase (317 aa).

S109–P112 is a (6S)-5,6,7,8-tetrahydrofolate binding site.

The protein belongs to the Fmt family.

The enzyme catalyses L-methionyl-tRNA(fMet) + (6R)-10-formyltetrahydrofolate = N-formyl-L-methionyl-tRNA(fMet) + (6S)-5,6,7,8-tetrahydrofolate + H(+). Its function is as follows. Attaches a formyl group to the free amino group of methionyl-tRNA(fMet). The formyl group appears to play a dual role in the initiator identity of N-formylmethionyl-tRNA by promoting its recognition by IF2 and preventing the misappropriation of this tRNA by the elongation apparatus. This is Methionyl-tRNA formyltransferase from Halalkalibacterium halodurans (strain ATCC BAA-125 / DSM 18197 / FERM 7344 / JCM 9153 / C-125) (Bacillus halodurans).